Reading from the N-terminus, the 349-residue chain is Magnesium-protoporphyrin IX monomethyl ester [oxidative] cyclase (349 aa).

The segment at 1 to 22 (MTATASASSVSGSLGRNELPPH) is disordered.

Belongs to the AcsF family. The cofactor is Fe cation.

It catalyses the reaction Mg-protoporphyrin IX 13-monomethyl ester + 3 NADPH + 3 O2 + 2 H(+) = 3,8-divinyl protochlorophyllide a + 3 NADP(+) + 5 H2O. The protein operates within porphyrin-containing compound metabolism; chlorophyll biosynthesis (light-independent). Functionally, catalyzes the formation of the isocyclic ring in chlorophyll biosynthesis. Mediates the cyclase reaction, which results in the formation of divinylprotochlorophyllide (Pchlide) characteristic of all chlorophylls from magnesium-protoporphyrin IX 13-monomethyl ester (MgPMME). This chain is Magnesium-protoporphyrin IX monomethyl ester [oxidative] cyclase, found in Prochlorococcus marinus (strain MIT 9211).